A 221-amino-acid chain; its full sequence is Ras-related protein Rab-27A (221 aa).

Serine 2 carries the N-acetylserine modification. Position 2 is a phosphoserine (serine 2). 16-24 (GDSGVGKTS) lines the GTP pocket. The short motif at 38 to 46 (FITTVGIDF) is the Effector region element. Residues 74–78 (DTAGQ), 133–136 (NKSD), and 163–165 (SAA) each bind GTP. Cysteine 123 and cysteine 188 form a disulfide bridge. S-geranylgeranyl cysteine attachment occurs at residues cysteine 219 and cysteine 221. Cysteine 221 is modified (cysteine methyl ester).

The protein belongs to the small GTPase superfamily. Rab family. In terms of assembly, binds SYTL1, SLAC2B, MYRIP, SYTL3, SYTL4 and SYTL5. Interacts with RPH3A and RPH3A. Binds MLPH and SYTL2. Interacts with UNC13D. Does not interact with the BLOC-3 complex (heterodimer of HPS1 and HPS4). Interacts (GDP-bound form preferentially) with DENND10. As to expression, found in all the examined tissues except in brain. Low expression was found in thymus, kidney, muscle and placenta. Detected in melanocytes, and in most tumor cell lines examined. Expressed in cytotoxic T-lymphocytes (CTL) and mast cells.

The protein resides in the membrane. It localises to the melanosome. Its subcellular location is the late endosome. It is found in the lysosome. It carries out the reaction GTP + H2O = GDP + phosphate + H(+). Regulated by guanine nucleotide exchange factors (GEFs) which promote the exchange of bound GDP for free GTP, GTPase activating proteins (GAPs) which increase the GTP hydrolysis activity, and GDP dissociation inhibitors which inhibit the dissociation of the nucleotide from the GTPase. Activated by GEFs such as DENND10. Its function is as follows. Small GTPase which cycles between active GTP-bound and inactive GDP-bound states. In its active state, binds to a variety of effector proteins to regulate homeostasis of late endocytic pathway, including endosomal positioning, maturation and secretion. Plays a role in cytotoxic granule exocytosis in lymphocytes. Required for both granule maturation and granule docking and priming at the immunologic synapse. The protein is Ras-related protein Rab-27A (RAB27A) of Homo sapiens (Human).